A 372-amino-acid chain; its full sequence is DNA replication and repair protein RecF (372 aa).

ATP is bound at residue 30 to 37 (GENAQGKT).

It belongs to the RecF family.

It is found in the cytoplasm. Functionally, the RecF protein is involved in DNA metabolism; it is required for DNA replication and normal SOS inducibility. RecF binds preferentially to single-stranded, linear DNA. It also seems to bind ATP. The chain is DNA replication and repair protein RecF from Shouchella clausii (strain KSM-K16) (Alkalihalobacillus clausii).